Consider the following 152-residue polypeptide: Small heat shock protein HspA (152 aa).

In terms of domain architecture, sHSP spans 29–139 (TAGEANYPPC…KPRRIPIDNL (111 aa)).

This sequence belongs to the small heat shock protein (HSP20) family.

The sequence is that of Small heat shock protein HspA (hspA) from Bradyrhizobium diazoefficiens (strain JCM 10833 / BCRC 13528 / IAM 13628 / NBRC 14792 / USDA 110).